Consider the following 240-residue polypeptide: Probable septum site-determining protein MinC (240 aa).

The protein belongs to the MinC family. Interacts with MinD and FtsZ.

Its function is as follows. Cell division inhibitor that blocks the formation of polar Z ring septums. Rapidly oscillates between the poles of the cell to destabilize FtsZ filaments that have formed before they mature into polar Z rings. Prevents FtsZ polymerization. This chain is Probable septum site-determining protein MinC, found in Acinetobacter baylyi (strain ATCC 33305 / BD413 / ADP1).